The chain runs to 371 residues: Probable alcohol acetyltransferase (371 aa).

Residues S124 and H295 each act as charge relay system in the active site. A disordered region spans residues 325-352 (AKALEESPKESYSRPPAHQQPLHKNDFT). Positions 327-336 (ALEESPKESY) are enriched in basic and acidic residues.

Belongs to the AB hydrolase superfamily.

In terms of biological role, probable alcohol acetyltransferase that uses acetyl-CoA to synthesize acetate esters from various alcohols. Not involved in the synthesis of ethyl acetate. The sequence is that of Probable alcohol acetyltransferase (EAT2) from Cyberlindnera fabianii (Yeast).